Here is a 333-residue protein sequence, read N- to C-terminus: MAGKVILDFEKPLFELEAKLEEMRVCLRGSAREQDQQDADMLHRDIALLEQKVDALRRSIYKNLTRWQKVQLARHPERPYTLDYIYMMTRDFVELSGDRHFKDDKAIVGGFARLEESASGFSQTVMMIGHQKGRDTKSNLYRNFGMAQPEGYRKALRLMKLAEKFRKPVITLIDTPGAFPGIEAEERGQAEAIARNLFEMARLSVPIICVIIGEGASGGAIGIGVGDRVFMAENSWYSVISPESCSSILWRSWNYKEQAAEALKLTADDLLRQGIIDRIVPEPLGGAHTEPEAMAGTLKEMLVEELRDLMSKESDVLVRERVDKFSGMGVWDE.

One can recognise a CoA carboxyltransferase C-terminal domain in the interval 48–308 (LLEQKVDALR…KEMLVEELRD (261 aa)).

It belongs to the AccA family. Acetyl-CoA carboxylase is a heterohexamer composed of biotin carboxyl carrier protein (AccB), biotin carboxylase (AccC) and two subunits each of ACCase subunit alpha (AccA) and ACCase subunit beta (AccD).

It is found in the cytoplasm. The enzyme catalyses N(6)-carboxybiotinyl-L-lysyl-[protein] + acetyl-CoA = N(6)-biotinyl-L-lysyl-[protein] + malonyl-CoA. The protein operates within lipid metabolism; malonyl-CoA biosynthesis; malonyl-CoA from acetyl-CoA: step 1/1. In terms of biological role, component of the acetyl coenzyme A carboxylase (ACC) complex. First, biotin carboxylase catalyzes the carboxylation of biotin on its carrier protein (BCCP) and then the CO(2) group is transferred by the carboxyltransferase to acetyl-CoA to form malonyl-CoA. In Chlorobium limicola (strain DSM 245 / NBRC 103803 / 6330), this protein is Acetyl-coenzyme A carboxylase carboxyl transferase subunit alpha.